The following is a 327-amino-acid chain: Olfactory receptor 6A2 (327 aa).

Topologically, residues M1 to V26 are extracellular. N-linked (GlcNAc...) asparagine glycosylation is present at N5. Residues L27–I47 form a helical membrane-spanning segment. Residues M48–T55 lie on the Cytoplasmic side of the membrane. A helical transmembrane segment spans residues L56 to T76. The Extracellular portion of the chain corresponds to V77–T104. Residues C102 and C194 are joined by a disulfide bond. Residues Q105–Y125 traverse the membrane as a helical segment. At D126 to R144 the chain is on the cytoplasmic side. A helical transmembrane segment spans residues L145–V165. The Extracellular segment spans residues F166–E201. N191 is a glycosylation site (N-linked (GlcNAc...) asparagine). A helical transmembrane segment spans residues L202–S222. Over Y223 to A242 the chain is Cytoplasmic. A helical transmembrane segment spans residues F243–I263. Topologically, residues Y264 to N276 are extracellular. Residues K277–L297 traverse the membrane as a helical segment. Residues R298–V327 are Cytoplasmic-facing.

This sequence belongs to the G-protein coupled receptor 1 family.

Its subcellular location is the cell membrane. In terms of biological role, odorant receptor. This is Olfactory receptor 6A2 (OR6A2) from Homo sapiens (Human).